Reading from the N-terminus, the 353-residue chain is UPF0283 membrane protein YcjF (353 aa).

3 helical membrane passes run 70–90 (MVMG…VQWT), 100–120 (VALG…GSVV), and 213–233 (ESTL…FIAW).

It belongs to the UPF0283 family.

It localises to the cell inner membrane. The protein is UPF0283 membrane protein YcjF of Salmonella schwarzengrund (strain CVM19633).